The primary structure comprises 815 residues: Glycogen phosphorylase (815 aa).

The residue at position 662 (Lys-662) is an N6-(pyridoxal phosphate)lysine.

This sequence belongs to the glycogen phosphorylase family. Pyridoxal 5'-phosphate is required as a cofactor.

It catalyses the reaction [(1-&gt;4)-alpha-D-glucosyl](n) + phosphate = [(1-&gt;4)-alpha-D-glucosyl](n-1) + alpha-D-glucose 1-phosphate. Phosphorylase is an important allosteric enzyme in carbohydrate metabolism. Enzymes from different sources differ in their regulatory mechanisms and in their natural substrates. However, all known phosphorylases share catalytic and structural properties. This Shigella flexneri protein is Glycogen phosphorylase (glgP).